The primary structure comprises 355 residues: Probable GTP 3',8-cyclase (355 aa).

Residues 5–233 (AYGRPLKDLR…GRLHNRRVYR (229 aa)) form the Radical SAM core domain. Residue Arg-14 participates in GTP binding. The [4Fe-4S] cluster site is built by Cys-21, Cys-25, and Cys-28. Residue Lys-69 participates in GTP binding. Gly-73 serves as a coordination point for S-adenosyl-L-methionine. Thr-97 is a GTP binding site. Ser-121 is an S-adenosyl-L-methionine binding site. Lys-157 provides a ligand contact to GTP. Residues Cys-252 and Cys-255 each contribute to the [4Fe-4S] cluster site. Residue 257–259 (RVR) coordinates GTP. Cys-269 is a binding site for [4Fe-4S] cluster.

Belongs to the radical SAM superfamily. MoaA family. It depends on [4Fe-4S] cluster as a cofactor.

The enzyme catalyses GTP + AH2 + S-adenosyl-L-methionine = (8S)-3',8-cyclo-7,8-dihydroguanosine 5'-triphosphate + 5'-deoxyadenosine + L-methionine + A + H(+). The protein operates within cofactor biosynthesis; molybdopterin biosynthesis. Catalyzes the cyclization of GTP to (8S)-3',8-cyclo-7,8-dihydroguanosine 5'-triphosphate. This Aeropyrum pernix (strain ATCC 700893 / DSM 11879 / JCM 9820 / NBRC 100138 / K1) protein is Probable GTP 3',8-cyclase.